The chain runs to 324 residues: MKPSVILYKALPDDLLQRLQEHFTVHQVANLSPQTVEQNAAIFAEAEGLLGSNENVDAALLEKMPKLHATSTISVGYDNFDVDALTARKILLMHTPTVLTETVADTLMALVLSTARRVVEVAERVKAGEWTASIGPDWYGTDVHHKTLGIVGMGRIGMALAQRAHFGFNMPILYNARRHHKEAEERFNARYCDLDTLLQESDFVCLILPLTDETHHLFGAEQFAKMKSSAIFINAGRGPVVDENALIAALQKGEIHAAGLDVFEQEPLSVDSPLLSMANVVAVPHIGSATHETRYGMAACAVDNLIDALQGKVEKNCVNPHVAD.

Catalysis depends on residues Arg237 and Glu266. The active-site Proton donor is His285.

The protein belongs to the D-isomer specific 2-hydroxyacid dehydrogenase family. GhrB subfamily. In terms of assembly, homodimer.

The protein resides in the cytoplasm. The enzyme catalyses glycolate + NADP(+) = glyoxylate + NADPH + H(+). It carries out the reaction (R)-glycerate + NAD(+) = 3-hydroxypyruvate + NADH + H(+). The catalysed reaction is (R)-glycerate + NADP(+) = 3-hydroxypyruvate + NADPH + H(+). Its function is as follows. Catalyzes the NADPH-dependent reduction of glyoxylate and hydroxypyruvate into glycolate and glycerate, respectively. The protein is Glyoxylate/hydroxypyruvate reductase B of Shigella sonnei (strain Ss046).